Reading from the N-terminus, the 173-residue chain is Thiol-disulfide oxidoreductase ResA (173 aa).

A helical; Signal-anchor for type II membrane protein transmembrane segment spans residues 10 to 29 (VIILLILCGAVGFTLYQGYF). Positions 35–173 (MEIGKEAPNF…LEEYLKKITP (139 aa)) constitute a Thioredoxin domain. A disulfide bridge links cysteine 73 with cysteine 76.

This sequence belongs to the thioredoxin family. ResA subfamily.

The protein resides in the cell membrane. It participates in protein modification; cytochrome c assembly. Thiol-disulfide oxidoreductase which is required in disulfide reduction during c-type cytochrome synthesis. May accept reducing equivalents from CcdA, leading to breakage of disulfide bonds in apocytochrome c; following this reduction heme can be covalently attached. The protein is Thiol-disulfide oxidoreductase ResA of Bacillus thuringiensis subsp. konkukian (strain 97-27).